Consider the following 219-residue polypeptide: Probable transaldolase (219 aa).

The active-site Schiff-base intermediate with substrate is Lys-83.

The protein belongs to the transaldolase family. Type 3B subfamily.

It is found in the cytoplasm. It carries out the reaction D-sedoheptulose 7-phosphate + D-glyceraldehyde 3-phosphate = D-erythrose 4-phosphate + beta-D-fructose 6-phosphate. It functions in the pathway carbohydrate degradation; pentose phosphate pathway; D-glyceraldehyde 3-phosphate and beta-D-fructose 6-phosphate from D-ribose 5-phosphate and D-xylulose 5-phosphate (non-oxidative stage): step 2/3. Its function is as follows. Transaldolase is important for the balance of metabolites in the pentose-phosphate pathway. In Cereibacter sphaeroides (strain ATCC 17025 / ATH 2.4.3) (Rhodobacter sphaeroides), this protein is Probable transaldolase.